The following is a 506-amino-acid chain: CDK5 regulatory subunit-associated protein 3 (506 aa).

3 short sequence motifs (shuffled ATG8-binding motif) span residues 267 to 270, 292 to 295, and 310 to 313; these read IDWG. The segment at 269 to 506 is required for interaction with UFL1 and mediates interaction with CHEK1; it reads WGDFGVEAVS…RPVNLMGTSL (238 aa). The tract at residues 355–370 is RPL10a-binding domain (RBD); it reads DELMELEIFLAQRAVE. A Glycyl lysine isopeptide (Lys-Gly) (interchain with G-Cter in SUMO2) cross-link involves residue Lys-450.

This sequence belongs to the CDK5RAP3 family. Substrate adapter component of the UFM1 ribosome E3 ligase (UREL) complex, composed of UFL1, DDRGK1 and CDK5RAP3. Interaction with UFL1 anchors CDK5RAP3 in the cytoplasm, preventing its translocation to the nucleus which allows expression of the CCND1 cyclin and progression of cells through the G1/S transition. Interacts with ATG8 family proteins MAP1LC3A, MAP1LC3B, GABARAP, GABARAPL1 and GABARAPL2. Interacts with CDK5R1; competes with CDK5RAP1 and CDK5RAP2. Interacts with RELA. Interacts with CHEK1; may negatively regulate CHEK1 and thereby stimulate entry into mitosis. Interacts with CDKN2A/ARF and MDM2; forms a ternary complex involved in regulation of p53/TP53. Interacts with MAPK14. Interacts with CCNB1. Interacts with TUBG1; may regulate CDK5RAP3 in mitotic G2/M transition checkpoint. In terms of assembly, (Microbial infection) Interacts with hepatitis B virus large envelope protein mutant pre-s2; promotes mitotic entry. In terms of processing, may be phosphorylated by CDK5. Ubiquitinated. Probably triggers proteasomal degradation and is negatively regulated by UFL1. Post-translationally, may be ufmylated. In terms of processing, cleaved by caspases early during apoptosis, the resulting peptides may play a role in rupture of the nuclear envelope. In terms of tissue distribution, ubiquitously expressed. Expressed in heart, brain, placenta, lung, liver, skeletal muscle, kidney and pancreas. Isoform 3 is expressed in kidney, liver, skeletal muscle and placenta.

The protein localises to the endoplasmic reticulum membrane. The protein resides in the cytoplasm. It is found in the nucleus. Its subcellular location is the cytoskeleton. It localises to the microtubule organizing center. The protein localises to the centrosome. Its function is as follows. Substrate adapter of E3 ligase complexes mediating ufmylation, the covalent attachment of the ubiquitin-like modifier UFM1 to substrate proteins, and which is involved in various processes, such as ribosome recycling and reticulophagy (also called ER-phagy). As part of the UREL complex, plays a key role in ribosome recycling by promoting mono-ufmylation of RPL26/uL24 subunit of the 60S ribosome. Ufmylation of RPL26/uL24 occurs on free 60S ribosomes following ribosome dissociation: it weakens the junction between post-termination 60S subunits and SEC61 translocons, promoting release and recycling of the large ribosomal subunit from the endoplasmic reticulum membrane. Ufmylation of RPL26/uL24 and subsequent 60S ribosome recycling either take place after normal termination of translation or after ribosome stalling during cotranslational translocation at the endoplasmic reticulum. Within the UREL complex, CDK5RAP3 acts as a substrate adapter that constrains UFL1 ligase activity to mono-ufmylate RPL26/uL24 at 'Lys-134'. The UREL complex is also involved in reticulophagy in response to endoplasmic reticulum stress by promoting ufmylation of proteins such as CYB5R3, thereby promoting lysosomal degradation of ufmylated proteins. Also acts as a regulator of transcription: negatively regulates NF-kappa-B-mediated gene transcription through the control of RELA phosphorylation. Also regulates mitotic G2/M transition checkpoint and mitotic G2 DNA damage checkpoint. Through its interaction with CDKN2A/ARF and MDM2 may induce MDM2-dependent p53/TP53 ubiquitination, stabilization and activation in the nucleus, thereby promoting G1 cell cycle arrest and inhibition of cell proliferation. May also play a role in the rupture of the nuclear envelope during apoptosis. May regulate MAPK14 activity by regulating its dephosphorylation by PPM1D/WIP1. Required for liver development. Functionally, (Microbial infection) May be negatively regulated by hepatitis B virus large envelope protein mutant pre-s2 to promote mitotic entry. This is CDK5 regulatory subunit-associated protein 3 from Homo sapiens (Human).